The following is a 342-amino-acid chain: AM-toxin biosynthesis protein 12 (342 aa).

The signal sequence occupies residues 1–20 (MSLLITSLAWGALLDPEVSS).

Its pathway is mycotoxin biosynthesis. Part of the gene clusters that mediate the biosynthesis of AM-toxins, host-selective toxins (HSTs) causing Alternaria blotch on apple, a worldwide distributed disease. AM-toxins are cyclic depsipeptides containing the 3 residues 2-hydroxy-isovaleric acid (2-HIV), dehydroalanine, L-alanine which are common for all 3 AM-toxins I to III. The fourth precursor is L-alpha-amino-methoxyphenyl-valeric acid (L-Amv) for AM-toxin I, L-alpha-amino-phenyl-valeric acid (L-Apv) for AM-toxin II, and L-alpha-amino-hydroxyphenyl-valeric acid (L-Ahv) for AM-toxin III. AM-toxins have two target sites for affecting susceptible apple cells; they cause invagination of the plasma membrane and electrolyte loss and chloroplast disorganization. The non-ribosomal peptide synthetase AMT1 contains 4 catalytic modules and is responsible for activation of each residue in AM-toxin. The aldo-keto reductase AMT2 catalyzes the conversion of 2-keto-isovaleric acid (2-KIV) to 2-hydroxy-isovaleric acid (2-HIV), one of the precursor residues incorporated by AMT1 during AM-toxin biosynthesis, by reduction of its ketone to an alcohol. The cytochrome P450 monooxygenase AMT3 and the thioesterase AMT4 are also important for AM-toxin production, but their exact function within the AM-toxin biosynthesis are not known yet. Up to 21 proteins (including AMT1 to AMT4) are predicted to be involved in AM-toxin biosynthesis since their expression ishighly up-regulated in AM-toxin-producing cultures. The protein is AM-toxin biosynthesis protein 12 of Alternaria alternata (Alternaria rot fungus).